A 154-amino-acid polypeptide reads, in one-letter code: Myoglobin (154 aa).

Residues 2–148 (GLSDQEWQQV…FRNDMASKYK (147 aa)) enclose the Globin domain. H65 lines the nitrite pocket. H65 contacts O2. H94 contributes to the heme b binding site.

As to quaternary structure, monomeric.

The protein localises to the cytoplasm. It localises to the sarcoplasm. It carries out the reaction Fe(III)-heme b-[protein] + nitric oxide + H2O = Fe(II)-heme b-[protein] + nitrite + 2 H(+). The catalysed reaction is H2O2 + AH2 = A + 2 H2O. Functionally, monomeric heme protein which primary function is to store oxygen and facilitate its diffusion within muscle tissues. Reversibly binds oxygen through a pentacoordinated heme iron and enables its timely and efficient release as needed during periods of heightened demand. Depending on the oxidative conditions of tissues and cells, and in addition to its ability to bind oxygen, it also has a nitrite reductase activity whereby it regulates the production of bioactive nitric oxide. Under stress conditions, like hypoxia and anoxia, it also protects cells against reactive oxygen species thanks to its pseudoperoxidase activity. This is Myoglobin (MB) from Struthio camelus (Common ostrich).